A 244-amino-acid polypeptide reads, in one-letter code: uncharacterized protein (244 aa).

An N-terminal signal peptide occupies residues 1-18 (MQFSVLCKFLLLVTAVMA). Topologically, residues 19 to 223 (QTEYTPGFTT…TTIPSSAVHY (205 aa)) are lumenal. 2 stretches are compositionally biased toward low complexity: residues 55–65 (ETSTHSVTSTN) and 75–128 (TSHN…TTHV). Residues 55–128 (ETSTHSVTST…TTVVPPTTHV (74 aa)) are disordered. The chain crosses the membrane as a helical span at residues 224–244 (ASPSGLLALVVMLISAFAFLA).

The protein localises to the endoplasmic reticulum membrane. This is an uncharacterized protein from Schizosaccharomyces pombe (strain 972 / ATCC 24843) (Fission yeast).